Reading from the N-terminus, the 258-residue chain is Acyl-[acyl-carrier-protein]--UDP-N-acetylglucosamine O-acyltransferase (258 aa).

This sequence belongs to the transferase hexapeptide repeat family. LpxA subfamily. In terms of assembly, homotrimer.

The protein resides in the cytoplasm. The catalysed reaction is a (3R)-hydroxyacyl-[ACP] + UDP-N-acetyl-alpha-D-glucosamine = a UDP-3-O-[(3R)-3-hydroxyacyl]-N-acetyl-alpha-D-glucosamine + holo-[ACP]. The protein operates within glycolipid biosynthesis; lipid IV(A) biosynthesis; lipid IV(A) from (3R)-3-hydroxytetradecanoyl-[acyl-carrier-protein] and UDP-N-acetyl-alpha-D-glucosamine: step 1/6. Involved in the biosynthesis of lipid A, a phosphorylated glycolipid that anchors the lipopolysaccharide to the outer membrane of the cell. The sequence is that of Acyl-[acyl-carrier-protein]--UDP-N-acetylglucosamine O-acyltransferase from Thiobacillus denitrificans (strain ATCC 25259 / T1).